An 852-amino-acid polypeptide reads, in one-letter code: Zinc finger and SCAN domain-containing protein 29 (852 aa).

Residues 18-100 (RQRFRRFHYQ…TLVEDLEREP (83 aa)) form the SCAN box domain. 3 disordered regions span residues 96–182 (LERE…PKSG), 347–400 (ASHS…SAAP), and 502–557 (PNDG…RAPV). Lys112 is covalently cross-linked (Glycyl lysine isopeptide (Lys-Gly) (interchain with G-Cter in SUMO2)). Ser153 bears the Phosphoserine mark. Residue Lys180 forms a Glycyl lysine isopeptide (Lys-Gly) (interchain with G-Cter in SUMO2) linkage. Residues 508–517 (ETASCPVQGT) are compositionally biased toward polar residues. Acidic residues predominate over residues 528 to 545 (EADEATEEDSDDDEEDTE). Ser561 carries the phosphoserine modification. A Glycyl lysine isopeptide (Lys-Gly) (interchain with G-Cter in SUMO2) cross-link involves residue Lys576. Residues 603 to 625 (QGKGNESDCRSGRQWAKTSGEKR) form a disordered region. Lys652 participates in a covalent cross-link: Glycyl lysine isopeptide (Lys-Gly) (interchain with G-Cter in SUMO2). 6 consecutive C2H2-type zinc fingers follow at residues 678 to 700 (YKCA…RRIH), 706 to 728 (YKCL…RRIH), 734 to 756 (YQCG…QRTH), 762 to 784 (YQCE…RRIH), 790 to 812 (HVCP…HRTH), and 818 to 840 (YGCH…GEIH).

Belongs to the krueppel C2H2-type zinc-finger protein family.

Its subcellular location is the nucleus. Functionally, may be involved in transcriptional regulation. The protein is Zinc finger and SCAN domain-containing protein 29 (ZSCAN29) of Homo sapiens (Human).